A 1632-amino-acid polypeptide reads, in one-letter code: uncharacterized protein (1632 aa).

Over residues 1–15 (MSNNKQTAAPAATSN) the composition is skewed to polar residues. The interval 1–23 (MSNNKQTAAPAATSNEKAENGAE) is disordered. Topologically, residues 1 to 63 (MSNNKQTAAP…TKDAFKGKYR (63 aa)) are cytoplasmic. A helical membrane pass occupies residues 64-86 (VFYGNGLHTSIMFGAGTAALDLM). Residues 87–1632 (TPGSFLPPFP…ESDGEEMSGE (1546 aa)) lie on the Extracellular side of the membrane. Asn149 and Asn274 each carry an N-linked (GlcNAc...) asparagine; by host glycan. Residues 516-538 (ELSSQLGDTDTKKEQKEKRSKQG) are disordered. 3 N-linked (GlcNAc...) asparagine; by host glycosylation sites follow: Asn654, Asn719, and Asn797. A disordered region spans residues 838 to 890 (IKGTKKSDDGDSKTDGSGDMEDDFTSLAKMTNRKRKAGGKDGPSKKKKKDGAD). Composition is skewed to basic and acidic residues over residues 842–853 (KKSDDGDSKTDG) and 875–890 (GGKD…DGAD). N-linked (GlcNAc...) asparagine; by host glycans are attached at residues Asn1012, Asn1031, Asn1261, Asn1339, Asn1511, and Asn1546. The interval 1603–1632 (PSAMDVDEDEDEDMDDESDDESDGEEMSGE) is disordered. A compositionally biased stretch (acidic residues) spans 1607–1632 (DVDEDEDEDMDDESDDESDGEEMSGE).

Its subcellular location is the host membrane. This is an uncharacterized protein from Ostreid herpesvirus 1 (isolate France) (OsHV-1).